The primary structure comprises 483 residues: Cobyric acid synthase (483 aa).

In terms of domain architecture, GATase cobBQ-type spans 251-438 (ALIVAVPMLP…LHGVFSADRF (188 aa)). Cys-333 functions as the Nucleophile in the catalytic mechanism. His-430 is a catalytic residue.

This sequence belongs to the CobB/CobQ family. CobQ subfamily.

Its pathway is cofactor biosynthesis; adenosylcobalamin biosynthesis. Functionally, catalyzes amidations at positions B, D, E, and G on adenosylcobyrinic A,C-diamide. NH(2) groups are provided by glutamine, and one molecule of ATP is hydrogenolyzed for each amidation. The protein is Cobyric acid synthase of Brucella melitensis biotype 2 (strain ATCC 23457).